The chain runs to 323 residues: Acetyl-coenzyme A carboxylase carboxyl transferase subunit alpha 1 (323 aa).

Residues 39–293 (RLSKKSQQLT…RRALGDSLRQ (255 aa)) form the CoA carboxyltransferase C-terminal domain.

This sequence belongs to the AccA family. Acetyl-CoA carboxylase is a heterohexamer composed of biotin carboxyl carrier protein (AccB), biotin carboxylase (AccC) and two subunits each of ACCase subunit alpha (AccA) and ACCase subunit beta (AccD).

The protein resides in the cytoplasm. The enzyme catalyses N(6)-carboxybiotinyl-L-lysyl-[protein] + acetyl-CoA = N(6)-biotinyl-L-lysyl-[protein] + malonyl-CoA. The protein operates within lipid metabolism; malonyl-CoA biosynthesis; malonyl-CoA from acetyl-CoA: step 1/1. Functionally, component of the acetyl coenzyme A carboxylase (ACC) complex. First, biotin carboxylase catalyzes the carboxylation of biotin on its carrier protein (BCCP) and then the CO(2) group is transferred by the carboxyltransferase to acetyl-CoA to form malonyl-CoA. Its function is as follows. Does not confer resistance to the endogenous polyketide antibiotic thailandamide, does not confer resistance to thailandamide when expressed in S.typhimurium. This Burkholderia thailandensis (strain ATCC 700388 / DSM 13276 / CCUG 48851 / CIP 106301 / E264) protein is Acetyl-coenzyme A carboxylase carboxyl transferase subunit alpha 1.